The chain runs to 108 residues: uncharacterized protein (108 aa).

A helical membrane pass occupies residues 59–81 (NIVIILWKIMVVIISSIIHRTYI).

The protein localises to the membrane. This is an uncharacterized protein from Rickettsia conorii (strain ATCC VR-613 / Malish 7).